Consider the following 506-residue polypeptide: Maturase K (506 aa).

Belongs to the intron maturase 2 family. MatK subfamily.

It localises to the plastid. The protein resides in the chloroplast. Its function is as follows. Usually encoded in the trnK tRNA gene intron. Probably assists in splicing its own and other chloroplast group II introns. The sequence is that of Maturase K from Gaultheria procumbens (Wintergreen).